We begin with the raw amino-acid sequence, 583 residues long: MDNKEKEDEELSDELKDQPGPSEKPRTPTVVAFTKPSFYRVNTVISDVKVCRSMSYDMCGNHQQELLFDLYKDETTGKVYLPRFFKALLESGIRKDDPRIDKMIQNIKDADLLDDFVWGTQHIYLEKDTFKRYIGSSIGVVTKALKKQMIIPDWERFVSDMGEIFEDVRSHNEGDLATYIPQLSRVAPDSWAMSVCTIDGQRKMWGDALKPFCLQSVSKPFTYALVHDDIGPEELHAHVGQEPSGRLFNDISLDHNKKPHNPLINAGAIVVASLLKNKLPLADRFDFMIHACRKFVGSGYIGFDNSVFLSERETADRNYALSYYMREHKVFPKDLNLQDTLDLYFQICSIETNCDSLAVMAATLANGGVNPMNGERIVNNRACRDTLSLMYSCGMYDWSGQFAFHVGLPAKSGVSGDMIIVIPNVMGIALYSPRLDKLGNTVRGVKFAEQLVQKYNFHNYDSLIYSDNKKIDPRRQLKDDHDGQNRFMYATKLGDIAAIKRFLLMGHDIHCKDYDDRTVLHVAAAEGDVVTLEYVLSKWQEDPNPCDRYDRTPLDDAKHFNHTACVKLLEEAITVYNLKGQDD.

Positions 1 to 29 (MDNKEKEDEELSDELKDQPGPSEKPRTPT) are disordered. 7 residues coordinate substrate: Ser-216, Asn-265, Glu-311, Asn-318, Tyr-344, Tyr-396, and Val-414. ANK repeat units follow at residues 482 to 514 (DGQN…CKDY), 515 to 548 (DDRT…PCDR), and 549 to 581 (YDRT…LKGQ).

It belongs to the glutaminase family.

It catalyses the reaction L-glutamine + H2O = L-glutamate + NH4(+). The sequence is that of Putative glutaminase 3 (glna-3) from Caenorhabditis elegans.